The primary structure comprises 347 residues: S-adenosylmethionine:tRNA ribosyltransferase-isomerase (347 aa).

This sequence belongs to the QueA family. As to quaternary structure, monomer.

The protein localises to the cytoplasm. The catalysed reaction is 7-aminomethyl-7-carbaguanosine(34) in tRNA + S-adenosyl-L-methionine = epoxyqueuosine(34) in tRNA + adenine + L-methionine + 2 H(+). Its pathway is tRNA modification; tRNA-queuosine biosynthesis. Functionally, transfers and isomerizes the ribose moiety from AdoMet to the 7-aminomethyl group of 7-deazaguanine (preQ1-tRNA) to give epoxyqueuosine (oQ-tRNA). This Bordetella pertussis (strain Tohama I / ATCC BAA-589 / NCTC 13251) protein is S-adenosylmethionine:tRNA ribosyltransferase-isomerase.